A 268-amino-acid polypeptide reads, in one-letter code: Tryptophan synthase alpha chain (268 aa).

Catalysis depends on proton acceptor residues Glu49 and Asp60.

It belongs to the TrpA family. Tetramer of two alpha and two beta chains.

The catalysed reaction is (1S,2R)-1-C-(indol-3-yl)glycerol 3-phosphate + L-serine = D-glyceraldehyde 3-phosphate + L-tryptophan + H2O. It functions in the pathway amino-acid biosynthesis; L-tryptophan biosynthesis; L-tryptophan from chorismate: step 5/5. Its function is as follows. The alpha subunit is responsible for the aldol cleavage of indoleglycerol phosphate to indole and glyceraldehyde 3-phosphate. This chain is Tryptophan synthase alpha chain, found in Erwinia tasmaniensis (strain DSM 17950 / CFBP 7177 / CIP 109463 / NCPPB 4357 / Et1/99).